Reading from the N-terminus, the 184-residue chain is Peptide deformylase (184 aa).

Fe cation is bound by residues Cys99 and His141. Residue Glu142 is part of the active site. His145 lines the Fe cation pocket.

The protein belongs to the polypeptide deformylase family. Requires Fe(2+) as cofactor.

It catalyses the reaction N-terminal N-formyl-L-methionyl-[peptide] + H2O = N-terminal L-methionyl-[peptide] + formate. Removes the formyl group from the N-terminal Met of newly synthesized proteins. Requires at least a dipeptide for an efficient rate of reaction. N-terminal L-methionine is a prerequisite for activity but the enzyme has broad specificity at other positions. The sequence is that of Peptide deformylase from Chlamydia abortus (strain DSM 27085 / S26/3) (Chlamydophila abortus).